A 251-amino-acid chain; its full sequence is Probable transcriptional regulatory protein MAB_2888c (251 aa).

Residues 1–20 form a disordered region; that stretch reads MSGHSKWATTKHQKAVKDAR.

The protein belongs to the TACO1 family.

The protein resides in the cytoplasm. The polypeptide is Probable transcriptional regulatory protein MAB_2888c (Mycobacteroides abscessus (strain ATCC 19977 / DSM 44196 / CCUG 20993 / CIP 104536 / JCM 13569 / NCTC 13031 / TMC 1543 / L948) (Mycobacterium abscessus)).